The primary structure comprises 590 residues: MRTHYADKVDSSLIDQTITLCGWVHRRRDHGGLIFIDLRDREGLVQVVCNPTESTVFKVAESLRNEYVIKVTGKVHKRPEGTVNPHIPSGEVEIAASDITLLNKSKPLPFNIDEYQEVSEEVRLKFRYLDLRRPEVAQRLKMRSYIIREIRRFLDERGFLDIETPMLTKSTPEGARDYLVPSRTHPGQFFALPQSPQIFKEILMVAGFDRYYQIVRCFRDEDLRADRQPEFTQLDLEMSFVEEKDIQQLMETMIRHLFSTFLNVPLPDPFPRITYDEAIKTYGTDRPDLRNPLTLVDVTDLMKSVEFKVFKEPANNPHGRIAVLRLPKGAELSRKAIDDYTQFVGIYGAKGLAYIKVENIDNGTGGLHSPILKFLPENVIAEILKRTQAQSGDILFFGADKAKIVNESLGALRDRLCADLNLYEGQWKPVWVVDFPMFDREDVGDWQALHHPFTALQETDPEKVIANPGDVLSRAYDMVLNGSEIGGGSIRINDIGMQYAVFKVLGISKEMAEAQFGHLLMALQFGSPPLGGIAFGLDRLVAIMTGASSIRDVIAFPKTQTAQCPLTNAPAQVETLQLETLGLKVSKHRK.

L-aspartate is bound at residue Glu-173. The interval 197–200 (QIFK) is aspartate. Arg-219 contributes to the L-aspartate binding site. ATP contacts are provided by residues 219–221 (RDE) and Gln-228. His-450 is a binding site for L-aspartate. ATP is bound at residue Glu-484. Arg-491 serves as a coordination point for L-aspartate. An ATP-binding site is contributed by 536 to 539 (GLDR).

This sequence belongs to the class-II aminoacyl-tRNA synthetase family. Type 1 subfamily. As to quaternary structure, homodimer.

The protein localises to the cytoplasm. The enzyme catalyses tRNA(Asx) + L-aspartate + ATP = L-aspartyl-tRNA(Asx) + AMP + diphosphate. Functionally, aspartyl-tRNA synthetase with relaxed tRNA specificity since it is able to aspartylate not only its cognate tRNA(Asp) but also tRNA(Asn). Reaction proceeds in two steps: L-aspartate is first activated by ATP to form Asp-AMP and then transferred to the acceptor end of tRNA(Asp/Asn). This Coxiella burnetii (strain RSA 331 / Henzerling II) protein is Aspartate--tRNA(Asp/Asn) ligase.